Here is a 163-residue protein sequence, read N- to C-terminus: tRNA-acetylating toxin 2 (163 aa).

Tyr137 is an active-site residue.

The protein belongs to the acetyltransferase family. GNAT subfamily. In terms of assembly, homodimer. Forms a complex with cognate antitoxin TacA2.

It catalyses the reaction glycyl-tRNA(Gly) + acetyl-CoA = N-acetylglycyl-tRNA(Gly) + CoA + H(+). The catalysed reaction is L-isoleucyl-tRNA(Ile) + acetyl-CoA = N-acetyl-L-isoleucyl-tRNA(Ile) + CoA + H(+). The enzyme catalyses L-leucyl-tRNA(Leu) + acetyl-CoA = N-acetyl-L-leucyl-tRNA(Leu) + CoA + H(+). In terms of biological role, toxic component of a type II toxin-antitoxin (TA) system. Acetylates tRNA and inhibits translation. Acetylates mainly Gly and Ile/Leu in vitro. Overexpression during the lag phase of a tacA2-tacT2 deletion strain leads to a 100-fold increase in persister cells in the presence of cefotaxime and a non-growth state in the absence of antibiotic. This protein, which has a single amino acid compared to S.typhimurium strain 14028s (Lys-29 is Glu in 14028s), produces 100-fold more persister cells, has much higher acetylation activity and binds tRNA much better. Persister cell formation and the growth defect are neutralized by cognate antitoxin TacA2. The TacA2-TacT2 complex both represses and derepresses expression of its own operon. The polypeptide is tRNA-acetylating toxin 2 (Salmonella enteritidis).